Here is a 278-residue protein sequence, read N- to C-terminus: Probable endonuclease 4 (278 aa).

Positions 69, 109, 145, 179, 182, 214, 227, 229, and 259 each coordinate Zn(2+).

The protein belongs to the AP endonuclease 2 family. It depends on Zn(2+) as a cofactor.

The enzyme catalyses Endonucleolytic cleavage to 5'-phosphooligonucleotide end-products.. Endonuclease IV plays a role in DNA repair. It cleaves phosphodiester bonds at apurinic or apyrimidinic (AP) sites, generating a 3'-hydroxyl group and a 5'-terminal sugar phosphate. The chain is Probable endonuclease 4 from Phocaeicola vulgatus (strain ATCC 8482 / DSM 1447 / JCM 5826 / CCUG 4940 / NBRC 14291 / NCTC 11154) (Bacteroides vulgatus).